Reading from the N-terminus, the 196-residue chain is Adenylate kinase (196 aa).

Residue 9 to 17 (GIPGVGKST) coordinates ATP.

It belongs to the archaeal adenylate kinase family.

The protein localises to the cytoplasm. It carries out the reaction AMP + ATP = 2 ADP. This is Adenylate kinase from Thermococcus onnurineus (strain NA1).